Reading from the N-terminus, the 508-residue chain is 3-octaprenyl-4-hydroxybenzoate carboxy-lyase (508 aa).

Asparagine 172 contacts Mn(2+). Prenylated FMN contacts are provided by residues isoleucine 175–arginine 177, arginine 189–leucine 191, and arginine 194–glycine 195. Glutamate 238 lines the Mn(2+) pocket. Aspartate 287 (proton donor) is an active-site residue. The interval glycine 483–valine 508 is disordered. Basic and acidic residues predominate over residues proline 498–valine 508.

This sequence belongs to the UbiD family. As to quaternary structure, homohexamer. It depends on prenylated FMN as a cofactor. Mn(2+) is required as a cofactor.

The protein localises to the cell membrane. It catalyses the reaction a 4-hydroxy-3-(all-trans-polyprenyl)benzoate + H(+) = a 2-(all-trans-polyprenyl)phenol + CO2. It participates in cofactor biosynthesis; ubiquinone biosynthesis. Functionally, catalyzes the decarboxylation of 3-octaprenyl-4-hydroxy benzoate to 2-octaprenylphenol, an intermediate step in ubiquinone biosynthesis. In Chromohalobacter salexigens (strain ATCC BAA-138 / DSM 3043 / CIP 106854 / NCIMB 13768 / 1H11), this protein is 3-octaprenyl-4-hydroxybenzoate carboxy-lyase.